The following is a 107-amino-acid chain: MTEKFKKLDPDTAIDIAYDIFLEMAGENLDPTDILLFNLQFEDHGGVEFVETADDWEQEIGVLIDPDEYAEVWVGLVNEQDEMDDIFAKFLISHKEEDREYHVVWKK.

This sequence belongs to the putative dsDNA mimic protein family.

In terms of biological role, may act as a double-stranded DNA (dsDNA) mimic. Probably regulates the activity of a dsDNA-binding protein. The chain is Putative double-stranded DNA mimic protein HS_0995 from Histophilus somni (strain 129Pt) (Haemophilus somnus).